The sequence spans 214 residues: ATP-dependent Clp protease proteolytic subunit (214 aa).

Ser110 functions as the Nucleophile in the catalytic mechanism. The active site involves His135.

The protein belongs to the peptidase S14 family. Fourteen ClpP subunits assemble into 2 heptameric rings which stack back to back to give a disk-like structure with a central cavity, resembling the structure of eukaryotic proteasomes.

It localises to the cytoplasm. It catalyses the reaction Hydrolysis of proteins to small peptides in the presence of ATP and magnesium. alpha-casein is the usual test substrate. In the absence of ATP, only oligopeptides shorter than five residues are hydrolyzed (such as succinyl-Leu-Tyr-|-NHMec, and Leu-Tyr-Leu-|-Tyr-Trp, in which cleavage of the -Tyr-|-Leu- and -Tyr-|-Trp bonds also occurs).. Cleaves peptides in various proteins in a process that requires ATP hydrolysis. Has a chymotrypsin-like activity. Plays a major role in the degradation of misfolded proteins. The sequence is that of ATP-dependent Clp protease proteolytic subunit from Legionella pneumophila (strain Paris).